The following is a 379-amino-acid chain: Lipid-A-disaccharide synthase (379 aa).

Belongs to the LpxB family.

The enzyme catalyses a lipid X + a UDP-2-N,3-O-bis[(3R)-3-hydroxyacyl]-alpha-D-glucosamine = a lipid A disaccharide + UDP + H(+). The protein operates within bacterial outer membrane biogenesis; LPS lipid A biosynthesis. Its function is as follows. Condensation of UDP-2,3-diacylglucosamine and 2,3-diacylglucosamine-1-phosphate to form lipid A disaccharide, a precursor of lipid A, a phosphorylated glycolipid that anchors the lipopolysaccharide to the outer membrane of the cell. The polypeptide is Lipid-A-disaccharide synthase (Vibrio parahaemolyticus serotype O3:K6 (strain RIMD 2210633)).